Consider the following 251-residue polypeptide: Ubiquinone/menaquinone biosynthesis C-methyltransferase UbiE (251 aa).

Residues threonine 74, aspartate 95, 123 to 124, and serine 140 each bind S-adenosyl-L-methionine; that span reads NA.

Belongs to the class I-like SAM-binding methyltransferase superfamily. MenG/UbiE family.

The enzyme catalyses a 2-demethylmenaquinol + S-adenosyl-L-methionine = a menaquinol + S-adenosyl-L-homocysteine + H(+). The catalysed reaction is a 2-methoxy-6-(all-trans-polyprenyl)benzene-1,4-diol + S-adenosyl-L-methionine = a 5-methoxy-2-methyl-3-(all-trans-polyprenyl)benzene-1,4-diol + S-adenosyl-L-homocysteine + H(+). Its pathway is quinol/quinone metabolism; menaquinone biosynthesis; menaquinol from 1,4-dihydroxy-2-naphthoate: step 2/2. The protein operates within cofactor biosynthesis; ubiquinone biosynthesis. In terms of biological role, methyltransferase required for the conversion of demethylmenaquinol (DMKH2) to menaquinol (MKH2) and the conversion of 2-polyprenyl-6-methoxy-1,4-benzoquinol (DDMQH2) to 2-polyprenyl-3-methyl-6-methoxy-1,4-benzoquinol (DMQH2). In Klebsiella pneumoniae (strain 342), this protein is Ubiquinone/menaquinone biosynthesis C-methyltransferase UbiE.